The following is a 178-amino-acid chain: Chorion class high-cysteine HCB protein 13 (178 aa).

An N-terminal signal peptide occupies residues 1–21 (MAAKLILFVCAIALVAQSVLG). The tract at residues 22–46 (TGCGCCCRGCGCGCGGCGSRCCDRF) is left arm. Residues 47-110 (CLCSNSAAPT…GDGCVGITQS (64 aa)) form a central domain region. The tract at residues 111 to 178 (CGGCGCGCGG…GCGCGGCGCC (68 aa)) is right arm (Gly-rich tandem repeats).

It belongs to the chorion protein family.

In terms of biological role, this protein is one of many from the eggshell of the silk moth. In Bombyx mori (Silk moth), this protein is Chorion class high-cysteine HCB protein 13.